A 621-amino-acid chain; its full sequence is Chaperone protein HtpG (621 aa).

Residues 1-341 (MSNQEYTFQT…SEDLPLNVSR (341 aa)) are a; substrate-binding. The b stretch occupies residues 342 to 547 (EILQQNKILA…GDEQNAMMAN (206 aa)). A c region spans residues 548–621 (LMRQMGQNMP…RLNSVLLKAL (74 aa)).

It belongs to the heat shock protein 90 family. Homodimer.

Its subcellular location is the cytoplasm. Functionally, molecular chaperone. Has ATPase activity. The chain is Chaperone protein HtpG from Helicobacter acinonychis (strain Sheeba).